The following is a 310-amino-acid chain: ADP-L-glycero-D-manno-heptose-6-epimerase (310 aa).

NADP(+) contacts are provided by residues 10–11, 31–32, Lys-38, Lys-53, 75–79, and Asn-92; these read FI, DN, and EGACS. Residue Tyr-140 is the Proton acceptor of the active site. Lys-144 serves as a coordination point for NADP(+). Asn-169 contacts substrate. NADP(+)-binding residues include Val-170 and Lys-178. The Proton acceptor role is filled by Lys-178. Substrate contacts are provided by residues Ser-180, His-187, 201 to 204, and Arg-209; that span reads FEGS. N6-acetyllysine is present on Lys-267. Tyr-272 provides a ligand contact to substrate.

Belongs to the NAD(P)-dependent epimerase/dehydratase family. HldD subfamily. Homopentamer. NADP(+) is required as a cofactor.

It carries out the reaction ADP-D-glycero-beta-D-manno-heptose = ADP-L-glycero-beta-D-manno-heptose. It functions in the pathway nucleotide-sugar biosynthesis; ADP-L-glycero-beta-D-manno-heptose biosynthesis; ADP-L-glycero-beta-D-manno-heptose from D-glycero-beta-D-manno-heptose 7-phosphate: step 4/4. Catalyzes the interconversion between ADP-D-glycero-beta-D-manno-heptose and ADP-L-glycero-beta-D-manno-heptose via an epimerization at carbon 6 of the heptose. The polypeptide is ADP-L-glycero-D-manno-heptose-6-epimerase (Escherichia coli (strain ATCC 8739 / DSM 1576 / NBRC 3972 / NCIMB 8545 / WDCM 00012 / Crooks)).